The chain runs to 370 residues: Ubiquitin carboxyl-terminal hydrolase 12 (370 aa).

Positions 1-4 match the Required for plasma membrane localization of USP12/WDR20 motif; that stretch reads MEIL. The 331-residue stretch at 39–369 folds into the USP domain; it reads FGLVNFGNTC…SGYILFYQSR (331 aa). The Nucleophile role is filled by Cys-48. Residues 145–169 are disordered; that stretch reads KQEKQNGRLPNGNIDNENNNSTPDP. Residues 157 to 168 show a composition bias toward polar residues; sequence NIDNENNNSTPD. Zn(2+) is bound by residues Cys-186, Cys-189, Cys-233, and Cys-236. Residue His-317 is the Proton acceptor of the active site.

Belongs to the peptidase C19 family. USP12/USP46 subfamily. Interacts with WDR48. Interacts with WDR20; this interaction promotes translocation of the USP12 complex to the plasma membrane. Component of the USP12-WDR20-WDR48 deubiquitinating complex. Component of the USP12-DMWD-WDR48 deubiquitinating complex. Interacts with PHLPP1. Interacts with RBPJ. Interacts with CBP; this interaction blocks the acetyltransferase activity of CREBBP. Interacts with ITCH; the interaction is more efficient when both USP12 and WDR48/UAF1 are involved and may mediate recruitment of the USP12 deubiquitinating complex to Notch. Interacts with OPTN and SQSTM1/p62; the interaction is independent of deubiquitinase activity and may be involved in regulation of autophagic flux. In terms of assembly, (Microbial infection) Interacts with Epstein-Barr virus protein EBNA3.

Its subcellular location is the nucleus. It is found in the cytoplasm. The protein localises to the cell membrane. It catalyses the reaction Thiol-dependent hydrolysis of ester, thioester, amide, peptide and isopeptide bonds formed by the C-terminal Gly of ubiquitin (a 76-residue protein attached to proteins as an intracellular targeting signal).. Its activity is regulated as follows. Activated by interaction with WDR20, WDR48 and DMWD through different allosteric mechanisms. In terms of biological role, deubiquitinating enzyme that plays various roles in the regulation of the immune response and inflammation. During TCR engagement and activation, translocates into the cytoplasm and deubiquitinates its substrates LAT and TRAT1 and prevents their lysosome-dependent degradation to stabilize the TCR signaling complex at the plasma membrane. Plays an essential role in the selective LPS-induced macrophage response through the activation of NF-kappa-B pathway. In addition, promotes that antiviral immune response through targeting DNA sensor IFI16 to inhibit its proteasome-dependent degradation. Participates in the interferon signaling pathway and antiviral response independently of its deubiquitinase activity by maintaining nuclear phosphorylated STAT1 levels via inhibition of its CREBBP-mediated acetylation and subsequent dephosphorylation. Plays an intrinsic role in promoting the differentiation, activation and proliferation of CD4(+) T-cell by activating the NF-kappa-B signaling pathway through deubiquitinating and stabilizing B-cell lymphoma/leukemia 10/BCL10. In myeloid-derived suppressor cells promotes the activation of the NF-kappa-B via deubiquitination and stabilization of RELA. Regulates the 'Lys-63'-linked polyubiquitin chains of BAX and thereby modulates the mitochondrial apoptotic process. Negative regulator of NOTCH signaling that specifically deubiquitinates non-activated NOTCH receptors to target them for lysosomal degradation; deubiquitination of NOTCH stimulates its transport form late endosomes to lysosomes. Protects neurons against HTT/huntingtin-induced polyglutamine expansion-dependent neurodegeneration through regulation of autophagic flux. This function is independent of deubiquitinase activity or of other components of the USP12-WDR20-WDR48 deubiquitinating complex. In complex with WDR48, acts as a potential tumor suppressor by positively regulating PHLPP1 stability. Functionally, (Microbial infection) Forms a complex with Epstein-Barr virus protein EBNA3 which is an active deubiquitinase activity that may select specific substrates to promote B-lymphocyte transformation. The chain is Ubiquitin carboxyl-terminal hydrolase 12 (USP12) from Homo sapiens (Human).